Consider the following 79-residue polypeptide: Calcium/calmodulin-dependent protein kinase II inhibitor 2 (79 aa).

The interval 43–69 (KRPPKLGQIGRAKRVVIEDDRIDEVLK) is inhibitory domain.

Belongs to the CAMK2N family.

The protein localises to the nucleus. The protein resides in the cytoplasm. Its subcellular location is the cytosol. Its function is as follows. Potent and specific cellular inhibitor of CaM-kinase II (CAMK2). Traps Ca(2+)/calmodulin on CAMK2. The chain is Calcium/calmodulin-dependent protein kinase II inhibitor 2 (camk2n2) from Xenopus tropicalis (Western clawed frog).